We begin with the raw amino-acid sequence, 155 residues long: UPF0178 protein TDE_2151 (155 aa).

This sequence belongs to the UPF0178 family.

The sequence is that of UPF0178 protein TDE_2151 from Treponema denticola (strain ATCC 35405 / DSM 14222 / CIP 103919 / JCM 8153 / KCTC 15104).